A 461-amino-acid chain; its full sequence is Cytochrome c biogenesis protein CcsB (461 aa).

3 consecutive transmembrane segments (helical) span residues 32-52 (LRLA…GTVI), 91-111 (TWWF…CTFT), and 178-198 (IGPI…IWGA).

This sequence belongs to the Ccs1/CcsB family. As to quaternary structure, may interact with CcsA.

It localises to the cellular thylakoid membrane. Required during biogenesis of c-type cytochromes (cytochrome c6 and cytochrome f) at the step of heme attachment. The protein is Cytochrome c biogenesis protein CcsB of Trichormus variabilis (strain ATCC 29413 / PCC 7937) (Anabaena variabilis).